The chain runs to 305 residues: Dermonecrotic toxin LiSicTox-alphaII1 (305 aa).

Residues 1-18 (MLLHIALILGCWSVFSEG) form the signal peptide. Residues 19-26 (AETDVAER) constitute a propeptide that is removed on maturation. H38 is an active-site residue. Residues E58 and D60 each contribute to the Mg(2+) site. H74 acts as the Nucleophile in catalysis. Disulfide bonds link C78–C84 and C80–C223. D118 is a Mg(2+) binding site.

Belongs to the arthropod phospholipase D family. Class II subfamily. Class IIa sub-subfamily. It depends on Mg(2+) as a cofactor. Expressed by the venom gland.

It localises to the secreted. It catalyses the reaction an N-(acyl)-sphingosylphosphocholine = an N-(acyl)-sphingosyl-1,3-cyclic phosphate + choline. The catalysed reaction is an N-(acyl)-sphingosylphosphoethanolamine = an N-(acyl)-sphingosyl-1,3-cyclic phosphate + ethanolamine. The enzyme catalyses a 1-acyl-sn-glycero-3-phosphocholine = a 1-acyl-sn-glycero-2,3-cyclic phosphate + choline. It carries out the reaction a 1-acyl-sn-glycero-3-phosphoethanolamine = a 1-acyl-sn-glycero-2,3-cyclic phosphate + ethanolamine. Functionally, dermonecrotic toxins cleave the phosphodiester linkage between the phosphate and headgroup of certain phospholipids (sphingolipid and lysolipid substrates), forming an alcohol (often choline) and a cyclic phosphate. This toxin acts on sphingomyelin (SM) wih high activity. It may also act on ceramide phosphoethanolamine (CPE), lysophosphatidylcholine (LPC) and lysophosphatidylethanolamine (LPE), but not on lysophosphatidylserine (LPS), and lysophosphatidylglycerol (LPG). It acts by transphosphatidylation, releasing exclusively cyclic phosphate products as second products. Shows high hemolytic activity. Causes dermonecrosis, induces inflammatory response, platelet aggregation and increases vessel permeability. Shows no lethality when injected at higher dose into mice. May cause complement-dependent hemolysis as well as in a complement-independent manner. The hemolysis provoked in a complement-independent manner may be composed of several steps. The toxin may bind to erythrocyte membranes, may hydrolyze membrane phospholipids (SM and LPC) thus generating metabolism products that may cause hemolysis, probably by provoking an increase of calcium inside cells. The calcium influx may be due to the opening of L-type calcium channels, since L-type calcium channel blockers inhibit calcium influx. The chain is Dermonecrotic toxin LiSicTox-alphaII1 from Loxosceles intermedia (Brown spider).